The sequence spans 62 residues: Conotoxin Pn-B02 (62 aa).

A signal peptide spans 1–19 (MRCLPVFIILLLLIASAPS). A propeptide spanning residues 20 to 49 (FDALPKTEDNVPLSSFHDNLKRTRRIHLNI) is cleaved from the precursor. A61 is subject to Alanine amide.

It belongs to the conotoxin T superfamily. Contains 2 disulfide bonds that can be either 'C1-C3, C2-C4' or 'C1-C4, C2-C3', since these disulfide connectivities have been observed for conotoxins with cysteine framework V (for examples, see AC P0DQQ7 and AC P81755). In terms of tissue distribution, expressed by the venom duct.

It is found in the secreted. The polypeptide is Conotoxin Pn-B02 (Conus pennaceus (Feathered cone)).